A 266-amino-acid chain; its full sequence is HLA class II histocompatibility antigen, DR beta 5 chain (266 aa).

An N-terminal signal peptide occupies residues 1-29; sequence MVCLKLPGGSYMAKLTVTLMVLSSPLALA. Positions 30–124 are beta-1; sequence GDTRPRFLQQ…GESFTVQRRV (95 aa). Residues 30–227 lie on the Extracellular side of the membrane; sequence GDTRPRFLQQ…RAQSESAQSK (198 aa). Disulfide bonds link cysteine 44–cysteine 108 and cysteine 146–cysteine 202. Asparagine 48 carries N-linked (GlcNAc...) asparagine glycosylation. The beta-2 stretch occupies residues 125–227; it reads EPKVTVYPAR…RAQSESAQSK (103 aa). The 89-residue stretch at 126–214 folds into the Ig-like C1-type domain; sequence PKVTVYPART…EHPSVTSPLT (89 aa). The helical transmembrane segment at 228-248 threads the bilayer; it reads MLSGVGGFVLGLLFLGAGLFI. Residues 249–266 lie on the Cytoplasmic side of the membrane; the sequence is YFKNQKGHSGLHPTGLVS.

This sequence belongs to the MHC class II family. In terms of assembly, heterodimer of an alpha and a beta subunit; also referred as MHC class II molecule. In the endoplasmic reticulum (ER) it forms a heterononamer; 3 MHC class II molecules bind to a CD74 homotrimer (also known as invariant chain or HLA class II histocompatibility antigen gamma chain). In the endosomal/lysosomal system; CD74 undergoes sequential degradation by various proteases; leaving a small fragment termed CLIP on each MHC class II molecule. MHC class II molecule interacts with HLA_DM, and HLA_DO in B-cells, in order to release CLIP and facilitate the binding of antigenic peptides. Ubiquitinated by MARCH1 and MARCH8 at Lys-254 leading to down-regulation of MHC class II.

The protein resides in the cell membrane. It is found in the endoplasmic reticulum membrane. The protein localises to the golgi apparatus. Its subcellular location is the trans-Golgi network membrane. It localises to the endosome membrane. The protein resides in the lysosome membrane. It is found in the late endosome membrane. Functionally, binds peptides derived from antigens that access the endocytic route of antigen presenting cells (APC) and presents them on the cell surface for recognition by the CD4 T-cells. The peptide binding cleft accommodates peptides of 10-30 residues. The peptides presented by MHC class II molecules are generated mostly by degradation of proteins that access the endocytic route, where they are processed by lysosomal proteases and other hydrolases. Exogenous antigens that have been endocytosed by the APC are thus readily available for presentation via MHC II molecules, and for this reason this antigen presentation pathway is usually referred to as exogenous. As membrane proteins on their way to degradation in lysosomes as part of their normal turn-over are also contained in the endosomal/lysosomal compartments, exogenous antigens must compete with those derived from endogenous components. Autophagy is also a source of endogenous peptides, autophagosomes constitutively fuse with MHC class II loading compartments. In addition to APCs, other cells of the gastrointestinal tract, such as epithelial cells, express MHC class II molecules and CD74 and act as APCs, which is an unusual trait of the GI tract. To produce a MHC class II molecule that presents an antigen, three MHC class II molecules (heterodimers of an alpha and a beta chain) associate with a CD74 trimer in the ER to form a heterononamer. Soon after the entry of this complex into the endosomal/lysosomal system where antigen processing occurs, CD74 undergoes a sequential degradation by various proteases, including CTSS and CTSL, leaving a small fragment termed CLIP (class-II-associated invariant chain peptide). The removal of CLIP is facilitated by HLA-DM via direct binding to the alpha-beta-CLIP complex so that CLIP is released. HLA-DM stabilizes MHC class II molecules until primary high affinity antigenic peptides are bound. The MHC II molecule bound to a peptide is then transported to the cell membrane surface. In B-cells, the interaction between HLA-DM and MHC class II molecules is regulated by HLA-DO. Primary dendritic cells (DCs) also to express HLA-DO. Lysosomal microenvironment has been implicated in the regulation of antigen loading into MHC II molecules, increased acidification produces increased proteolysis and efficient peptide loading. The protein is HLA class II histocompatibility antigen, DR beta 5 chain of Homo sapiens (Human).